Consider the following 106-residue polypeptide: UPF0060 membrane protein AZC_0909 (106 aa).

A run of 4 helical transmembrane segments spans residues 4 to 24 (PLFALAALAEIAGCFAFWHVV), 27 to 47 (GGSPLWLAPGVLSLVAFAALL), 58 to 78 (AFAAYGGIYILASLGWMWAAE), and 84 to 104 (RFDALGAAICLAGACVILFAP).

The protein belongs to the UPF0060 family.

The protein localises to the cell inner membrane. This Azorhizobium caulinodans (strain ATCC 43989 / DSM 5975 / JCM 20966 / LMG 6465 / NBRC 14845 / NCIMB 13405 / ORS 571) protein is UPF0060 membrane protein AZC_0909.